The following is a 199-amino-acid chain: Ribonuclease HII (199 aa).

Residues 10-199 (HLVAGVDEVG…VKRALGLASN (190 aa)) enclose the RNase H type-2 domain. Positions 16, 17, and 108 each coordinate a divalent metal cation.

Belongs to the RNase HII family. The cofactor is Mn(2+). It depends on Mg(2+) as a cofactor.

The protein resides in the cytoplasm. The enzyme catalyses Endonucleolytic cleavage to 5'-phosphomonoester.. Functionally, endonuclease that specifically degrades the RNA of RNA-DNA hybrids. In Klebsiella pneumoniae (strain 342), this protein is Ribonuclease HII.